Reading from the N-terminus, the 742-residue chain is MYTQTLYELSQEAERLLQLSRQQLQLLEKMPLSVPGDDAPQLALPWSQPNIAERHAMLNNELRKISRLEMVLAIVGTMKAGKSTTINAIVGTEVLPNRNRPMTALPTLIRHTPGQKEPVLHFSHVAPIDCLIQQLQQRLRDCDIKHLTDVLEIDKDMRALMQRIENGVAFEKYYLGAQPIFHCLKSLNDLVRLAKALDVDFPFSAYAAIEHIPVIEVEFVHLAGLESYPGQLTLLDTPGPNEAGQPHLQKMLNQQLARASAVLAVLDYTQLKSISDEEVREAILAVGQSVPLYVLVNKFDQQDRNSDDADQVRALISGTLMKGCITPQQIFPVSSMWGYLANRARYELANNGKLPPPEQQRWVEDFAHAALGRRWRHADLADLEHIRHAADQLWEDSLFAQPIQALLHAAYANASLYALRSAAHKLLNYAQQAREYLDFRAHGLNVACEQLRQNIHQIEESLQLLQLNQAQVSGEIKHEIELALTSANHFLRQQQDALKVQLAALFQDDSEPLSEIRTRCETLLQTAQNTISRDFTLRFAELESTLCRVLTDVIRPIEQQVKMELSESGFRPGFHFPVFHGVVPHFNTRQLFSEVISRQEATDEQSTRLGVVRETFSRWLNQPDWGRGNEKSPTETVDYSVLQRALSAEVDLYCQQMAKVLAEQVDESVTAGMNTFFAEFASCLTELQTRLRESLALRQQNESVVRLMQQQLQQTVMTHGWIYTDAQLLRDDIQTLFTAERY.

The interval Gln-41–Pro-45 is clamp-binding consensus. The Dynamin-type G domain maps to Ser-66–Pro-402. The tract at residues Gly-76–Ser-83 is G1 motif. Positions Met-102–Ala-104 are G2 motif. A G3 motif region spans residues Asp-236–Gly-239. Residues Asn-297–Asp-300 form a G4 motif region. The G5 motif stretch occupies residues Phe-331–Ser-334. Residues Arg-440–Val-472 are a coiled coil.

It belongs to the TRAFAC class dynamin-like GTPase superfamily. Dynamin/Fzo/YdjA family. In terms of assembly, forms homooligomers. Binds to the beta sliding clamp processivity factor (DnaN) in the presence and absence of DNA, may bind to the clamp itself as homodimers or trimers. Homooligomers may be able to bind more than 1 clamp complex.

Its subcellular location is the cytoplasm. Its function is as follows. Important for the colocalization of sister nascent DNA strands after replication fork passage during DNA replication, and for positioning and subsequent partitioning of sister chromosomes. Does not have GTPase activity on its own. This chain is Clamp-binding protein CrfC (crfC), found in Escherichia coli (strain K12).